Reading from the N-terminus, the 320-residue chain is Transaldolase (320 aa).

K126 acts as the Schiff-base intermediate with substrate in catalysis.

Belongs to the transaldolase family. Type 1 subfamily. Homodimer.

It is found in the cytoplasm. The enzyme catalyses D-sedoheptulose 7-phosphate + D-glyceraldehyde 3-phosphate = D-erythrose 4-phosphate + beta-D-fructose 6-phosphate. Its pathway is carbohydrate degradation; pentose phosphate pathway; D-glyceraldehyde 3-phosphate and beta-D-fructose 6-phosphate from D-ribose 5-phosphate and D-xylulose 5-phosphate (non-oxidative stage): step 2/3. In terms of biological role, transaldolase is important for the balance of metabolites in the pentose-phosphate pathway. The protein is Transaldolase of Bordetella bronchiseptica (strain ATCC BAA-588 / NCTC 13252 / RB50) (Alcaligenes bronchisepticus).